The sequence spans 270 residues: Putative phosphoenolpyruvate synthase regulatory protein (270 aa).

149–156 (GVSRSGKT) is an ADP binding site.

The protein belongs to the pyruvate, phosphate/water dikinase regulatory protein family. PSRP subfamily.

The catalysed reaction is [pyruvate, water dikinase] + ADP = [pyruvate, water dikinase]-phosphate + AMP + H(+). It catalyses the reaction [pyruvate, water dikinase]-phosphate + phosphate + H(+) = [pyruvate, water dikinase] + diphosphate. Its function is as follows. Bifunctional serine/threonine kinase and phosphorylase involved in the regulation of the phosphoenolpyruvate synthase (PEPS) by catalyzing its phosphorylation/dephosphorylation. The sequence is that of Putative phosphoenolpyruvate synthase regulatory protein from Pseudoalteromonas atlantica (strain T6c / ATCC BAA-1087).